Reading from the N-terminus, the 522-residue chain is Peptide chain release factor 3 (522 aa).

Residues 10 to 277 (ASRKTFAIIS…TFVDFAPSPS (268 aa)) enclose the tr-type G domain. Residues 19–26 (SHPDAGKT), 87–91 (DTPGH), and 141–144 (NKMD) contribute to the GTP site.

Belongs to the TRAFAC class translation factor GTPase superfamily. Classic translation factor GTPase family. PrfC subfamily.

It is found in the cytoplasm. Increases the formation of ribosomal termination complexes and stimulates activities of RF-1 and RF-2. It binds guanine nucleotides and has strong preference for UGA stop codons. It may interact directly with the ribosome. The stimulation of RF-1 and RF-2 is significantly reduced by GTP and GDP, but not by GMP. The polypeptide is Peptide chain release factor 3 (Listeria innocua serovar 6a (strain ATCC BAA-680 / CLIP 11262)).